Consider the following 283-residue polypeptide: MSNQHSSTAAPSSYILDSANQPTSFDGNEQGDVNPKPLDHIRPVCNLETQMSNLPTDSVYASQPDGGLVAWLQVLGAWVLFFNTWGAMNSFGVFQTYYESGVLFDRSSSDIAWIGSIQTFCLQAMGLVAGPLYDRGGFKILIVTGSVGVVSGYMMLSLCEEFWQVLLAQGFLIGIAEGCLFTPMISILPTYFSTKIGLATGIASSGSSMGGVVYPIVMKSLMYNIGFAWTTRVLGFISLGMLLIPIIVMRERVKPALRVHRDLIDLSVFTDWPFIVFVIATMI.

7 helical membrane-spanning segments follow: residues 68 to 88 (LVAW…WGAM), 111 to 131 (IAWI…VAGP), 136 to 156 (GGFK…YMML), 165 to 185 (VLLA…TPMI), 196 to 216 (IGLA…VYPI), 227 to 247 (FAWT…IPII), and 263 to 283 (LIDL…ATMI).

The protein belongs to the major facilitator superfamily. Monocarboxylate porter (TC 2.A.1.13) family.

Its subcellular location is the membrane. Functionally, MFS-type transporter; part of the gene cluster that mediates the biosynthesis of eupenifeldin, a bistropolone meroterpenoid that acts as an antitumor agent. This Phoma sp protein is MFS-type transporter eupM.